Consider the following 265-residue polypeptide: Tryptophan synthase alpha chain (265 aa).

Catalysis depends on proton acceptor residues Glu49 and Asp60.

This sequence belongs to the TrpA family. Tetramer of two alpha and two beta chains.

It carries out the reaction (1S,2R)-1-C-(indol-3-yl)glycerol 3-phosphate + L-serine = D-glyceraldehyde 3-phosphate + L-tryptophan + H2O. It participates in amino-acid biosynthesis; L-tryptophan biosynthesis; L-tryptophan from chorismate: step 5/5. Its function is as follows. The alpha subunit is responsible for the aldol cleavage of indoleglycerol phosphate to indole and glyceraldehyde 3-phosphate. This Polynucleobacter asymbioticus (strain DSM 18221 / CIP 109841 / QLW-P1DMWA-1) (Polynucleobacter necessarius subsp. asymbioticus) protein is Tryptophan synthase alpha chain.